Here is a 640-residue protein sequence, read N- to C-terminus: Chaperone protein DnaK (640 aa).

T196 carries the post-translational modification Phosphothreonine; by autocatalysis. Disordered regions lie at residues 487-526 (GKEQ…KEEI) and 593-640 (SHLY…GNDK). Basic and acidic residues predominate over residues 501 to 526 (TDAEISKMKEDAKEHAAEDQKRKEEI). Positions 595 to 613 (LYQSQGPESSQPETAAQSD) are enriched in polar residues. Residues 630 to 640 (AEYEVIDGNDK) show a composition bias toward acidic residues.

Belongs to the heat shock protein 70 family.

Functionally, acts as a chaperone. This Pelodictyon phaeoclathratiforme (strain DSM 5477 / BU-1) protein is Chaperone protein DnaK.